We begin with the raw amino-acid sequence, 210 residues long: Probable GTP-binding protein EngB (210 aa).

In terms of domain architecture, EngB-type G spans 24–199 (QGCEVAFAGR…WEVLGRWLDL (176 aa)). GTP contacts are provided by residues 32 to 39 (GRSNAGKS), 59 to 63 (GRTRM), 77 to 80 (DLPG), 144 to 147 (TKSD), and 178 to 180 (FSS). Residues Ser39 and Thr61 each contribute to the Mg(2+) site.

It belongs to the TRAFAC class TrmE-Era-EngA-EngB-Septin-like GTPase superfamily. EngB GTPase family. Requires Mg(2+) as cofactor.

Necessary for normal cell division and for the maintenance of normal septation. The chain is Probable GTP-binding protein EngB from Methylococcus capsulatus (strain ATCC 33009 / NCIMB 11132 / Bath).